The following is a 120-amino-acid chain: V-type proton ATPase subunit F (120 aa).

The protein belongs to the V-ATPase F subunit family. In terms of assembly, V-ATPase is a heteromultimeric enzyme composed of a peripheral catalytic V1 complex (components A to H) attached to an integral membrane V0 proton pore complex (components: a, c, c', c'' and d).

Functionally, subunit of the peripheral V1 complex of vacuolar ATPase essential for assembly or catalytic function. V-ATPase is responsible for acidifying a variety of intracellular compartments in eukaryotic cells. The chain is V-type proton ATPase subunit F (vatF) from Dictyostelium discoideum (Social amoeba).